The primary structure comprises 512 residues: ATP synthase subunit alpha (512 aa).

169 to 176 (GDRQTGKT) contacts ATP.

The protein belongs to the ATPase alpha/beta chains family. In terms of assembly, F-type ATPases have 2 components, CF(1) - the catalytic core - and CF(0) - the membrane proton channel. CF(1) has five subunits: alpha(3), beta(3), gamma(1), delta(1), epsilon(1). CF(0) has three main subunits: a(1), b(2) and c(9-12). The alpha and beta chains form an alternating ring which encloses part of the gamma chain. CF(1) is attached to CF(0) by a central stalk formed by the gamma and epsilon chains, while a peripheral stalk is formed by the delta and b chains.

It is found in the cell inner membrane. The catalysed reaction is ATP + H2O + 4 H(+)(in) = ADP + phosphate + 5 H(+)(out). In terms of biological role, produces ATP from ADP in the presence of a proton gradient across the membrane. The alpha chain is a regulatory subunit. The chain is ATP synthase subunit alpha from Rickettsia akari (strain Hartford).